An 80-amino-acid chain; its full sequence is Cytochrome c oxidase subunit 7A1, mitochondrial (80 aa).

A mitochondrion-targeting transit peptide spans 1-21 (MLAPRVSQALIRSFSSTARNR). At 22–46 (LKNRVPEKQKLFQEDNGIPVYLKGG) the chain is on the mitochondrial matrix side. A helical membrane pass occupies residues 47–75 (VVDHILYRVTMGLCLGGTAYGVYCLAWAS). Over 76–80 (FPRNK) the chain is Mitochondrial intermembrane.

This sequence belongs to the cytochrome c oxidase VIIa family. As to quaternary structure, component of the complex IV (CIV, cytochrome c oxidase), a multisubunit enzyme composed of 14 subunits. The complex is composed of a catalytic core of 3 subunits MT-CO1, MT-CO2 and MT-CO3, encoded in the mitochondrial DNA, and 11 supernumerary subunits COX4I1 (or COX4I2), COX5A, COX5B, COX6A2 (or COX6A1), COX6B1 (or COX6B2), COX6C, COX7A1 (or COX7A2), COX7B, COX7C, COX8B and NDUFA4, which are encoded in the nuclear genome. The complex exists as a monomer or a dimer and forms supercomplexes (SCs) in the inner mitochondrial membrane with NADH-ubiquinone oxidoreductase (complex I, CI) and ubiquinol-cytochrome c oxidoreductase (cytochrome b-c1 complex, complex III, CIII), resulting in different assemblies (supercomplex SCI(1)III(2)IV(1) and megacomplex MCI(2)III(2)IV(2)).

Its subcellular location is the mitochondrion inner membrane. Its pathway is energy metabolism; oxidative phosphorylation. Its function is as follows. Component of the mitochondrial respiratory complex IV (CIV, also named cytochrome c oxidase complex), the last enzyme in the mitochondrial electron transport chain which drives oxidative phosphorylation. The CIV complex is the component of the respiratory chain that catalyzes the reduction of oxygen to water. Acts as an assembly factor that specifically drives the homodimerization of CIV complexes, mediating the formation of mitochondrial respiratory supercomplexes (respirasomes) containing two CIV: supercomplxes with two molecules of CIV show improved activity. Despite being highly expressed in brown adipose tissue, not required for thermogenesis. In Saimiri sciureus (Common squirrel monkey), this protein is Cytochrome c oxidase subunit 7A1, mitochondrial (COX7A1).